We begin with the raw amino-acid sequence, 565 residues long: Proline--tRNA ligase (565 aa).

Belongs to the class-II aminoacyl-tRNA synthetase family. ProS type 1 subfamily. As to quaternary structure, homodimer.

It localises to the cytoplasm. The catalysed reaction is tRNA(Pro) + L-proline + ATP = L-prolyl-tRNA(Pro) + AMP + diphosphate. In terms of biological role, catalyzes the attachment of proline to tRNA(Pro) in a two-step reaction: proline is first activated by ATP to form Pro-AMP and then transferred to the acceptor end of tRNA(Pro). As ProRS can inadvertently accommodate and process non-cognate amino acids such as alanine and cysteine, to avoid such errors it has two additional distinct editing activities against alanine. One activity is designated as 'pretransfer' editing and involves the tRNA(Pro)-independent hydrolysis of activated Ala-AMP. The other activity is designated 'posttransfer' editing and involves deacylation of mischarged Ala-tRNA(Pro). The misacylated Cys-tRNA(Pro) is not edited by ProRS. This is Proline--tRNA ligase from Francisella tularensis subsp. mediasiatica (strain FSC147).